A 280-amino-acid polypeptide reads, in one-letter code: 23S rRNA (guanine(748)-N(1))-methyltransferase (280 aa).

Cys11, Cys14, Cys27, and His31 together coordinate Zn(2+). S-adenosyl-L-methionine is bound by residues Tyr70, 100–101 (TG), and His188.

The protein belongs to the methyltransferase superfamily. RlmA family.

The enzyme catalyses guanosine(748) in 23S rRNA + S-adenosyl-L-methionine = N(1)-methylguanosine(748) in 23S rRNA + S-adenosyl-L-homocysteine + H(+). Functionally, specifically methylates the guanosine in position 748 of 23S rRNA. Confers resistance to the macrolide antibiotic tylosine. This is 23S rRNA (guanine(748)-N(1))-methyltransferase (rlmAII) from Streptomyces fradiae (Streptomyces roseoflavus).